A 560-amino-acid chain; its full sequence is DNA ligase B (560 aa).

Residue K124 is the N6-AMP-lysine intermediate of the active site.

The protein belongs to the NAD-dependent DNA ligase family. LigB subfamily.

The enzyme catalyses NAD(+) + (deoxyribonucleotide)n-3'-hydroxyl + 5'-phospho-(deoxyribonucleotide)m = (deoxyribonucleotide)n+m + AMP + beta-nicotinamide D-nucleotide.. Its function is as follows. Catalyzes the formation of phosphodiester linkages between 5'-phosphoryl and 3'-hydroxyl groups in double-stranded DNA using NAD as a coenzyme and as the energy source for the reaction. The sequence is that of DNA ligase B from Shigella flexneri serotype 5b (strain 8401).